We begin with the raw amino-acid sequence, 129 residues long: Iron-sulfur cluster assembly 1 homolog, mitochondrial (129 aa).

The N-terminal 12 residues, 1–12 (MASSVVRATVRA), are a transit peptide targeting the mitochondrion. The Fe cation site is built by cysteine 57, cysteine 121, and cysteine 123.

This sequence belongs to the HesB/IscA family.

It is found in the mitochondrion. Involved in the maturation of mitochondrial 4Fe-4S proteins functioning late in the iron-sulfur cluster assembly pathway. Probably involved in the binding of an intermediate of Fe/S cluster assembly. The chain is Iron-sulfur cluster assembly 1 homolog, mitochondrial (ISCA1) from Gallus gallus (Chicken).